We begin with the raw amino-acid sequence, 393 residues long: NAD(P)H-quinone oxidoreductase subunit H, chloroplastic (393 aa).

This sequence belongs to the complex I 49 kDa subunit family. As to quaternary structure, NDH is composed of at least 16 different subunits, 5 of which are encoded in the nucleus.

The protein localises to the plastid. The protein resides in the chloroplast thylakoid membrane. The catalysed reaction is a plastoquinone + NADH + (n+1) H(+)(in) = a plastoquinol + NAD(+) + n H(+)(out). It catalyses the reaction a plastoquinone + NADPH + (n+1) H(+)(in) = a plastoquinol + NADP(+) + n H(+)(out). In terms of biological role, NDH shuttles electrons from NAD(P)H:plastoquinone, via FMN and iron-sulfur (Fe-S) centers, to quinones in the photosynthetic chain and possibly in a chloroplast respiratory chain. The immediate electron acceptor for the enzyme in this species is believed to be plastoquinone. Couples the redox reaction to proton translocation, and thus conserves the redox energy in a proton gradient. The polypeptide is NAD(P)H-quinone oxidoreductase subunit H, chloroplastic (Fagopyrum esculentum subsp. ancestrale (Wild buckwheat)).